The following is a 265-amino-acid chain: Energy-coupling factor transporter transmembrane protein EcfT (265 aa).

5 helical membrane passes run Ile-29–Ile-49, Val-73–Val-93, Ala-110–Thr-130, Leu-143–Ile-163, and Phe-242–Trp-262.

The protein belongs to the energy-coupling factor EcfT family. As to quaternary structure, forms a stable energy-coupling factor (ECF) transporter complex composed of 2 membrane-embedded substrate-binding proteins (S component), 2 ATP-binding proteins (A component) and 2 transmembrane proteins (T component). May be able to interact with more than 1 S component at a time.

Its subcellular location is the cell membrane. Its function is as follows. Transmembrane (T) component of an energy-coupling factor (ECF) ABC-transporter complex. Unlike classic ABC transporters this ECF transporter provides the energy necessary to transport a number of different substrates. This Brevibacillus brevis (strain 47 / JCM 6285 / NBRC 100599) protein is Energy-coupling factor transporter transmembrane protein EcfT.